A 401-amino-acid chain; its full sequence is 8-amino-7-oxononanoate synthase (401 aa).

Position 24 (arginine 24) interacts with substrate. 111–112 (GF) serves as a coordination point for pyridoxal 5'-phosphate. Histidine 137 contacts substrate. Residues serine 183, histidine 211, and threonine 240 each contribute to the pyridoxal 5'-phosphate site. Residue lysine 243 is modified to N6-(pyridoxal phosphate)lysine. Threonine 357 serves as a coordination point for substrate.

Belongs to the class-II pyridoxal-phosphate-dependent aminotransferase family. BioF subfamily. Homodimer. Requires pyridoxal 5'-phosphate as cofactor.

It catalyses the reaction 6-carboxyhexanoyl-[ACP] + L-alanine + H(+) = (8S)-8-amino-7-oxononanoate + holo-[ACP] + CO2. It functions in the pathway cofactor biosynthesis; biotin biosynthesis. Its function is as follows. Catalyzes the decarboxylative condensation of pimeloyl-[acyl-carrier protein] and L-alanine to produce 8-amino-7-oxononanoate (AON), [acyl-carrier protein], and carbon dioxide. The polypeptide is 8-amino-7-oxononanoate synthase (Xanthomonas oryzae pv. oryzae (strain MAFF 311018)).